Here is a 649-residue protein sequence, read N- to C-terminus: Acetyl-coenzyme A synthetase (649 aa).

Residues 189-192 (RGGK), threonine 311, and asparagine 335 contribute to the CoA site. ATP is bound by residues 387-389 (GEP), 411-416 (DTWWQT), aspartate 500, and arginine 515. Serine 523 is a binding site for CoA. Position 526 (arginine 526) interacts with ATP. Mg(2+) is bound by residues valine 537, histidine 539, and valine 542. Residue arginine 584 participates in CoA binding. Lysine 609 carries the N6-acetyllysine modification.

Belongs to the ATP-dependent AMP-binding enzyme family. Mg(2+) is required as a cofactor. Post-translationally, acetylated. Deacetylation by the SIR2-homolog deacetylase activates the enzyme.

The catalysed reaction is acetate + ATP + CoA = acetyl-CoA + AMP + diphosphate. In terms of biological role, catalyzes the conversion of acetate into acetyl-CoA (AcCoA), an essential intermediate at the junction of anabolic and catabolic pathways. AcsA undergoes a two-step reaction. In the first half reaction, AcsA combines acetate with ATP to form acetyl-adenylate (AcAMP) intermediate. In the second half reaction, it can then transfer the acetyl group from AcAMP to the sulfhydryl group of CoA, forming the product AcCoA. The sequence is that of Acetyl-coenzyme A synthetase from Sinorhizobium medicae (strain WSM419) (Ensifer medicae).